Consider the following 193-residue polypeptide: Rho-related GTP-binding protein RhoA-A (193 aa).

GTP is bound by residues 12–19 (GDGACGKT), 30–37 (FPEVYVPT), 59–63 (DTAGQ), 117–120 (NKKD), and 160–162 (SAK). A glycan ((Microbial infection) O-linked (GlcNAc) tyrosine; by Yersinia Afp18) is linked at Tyr-34. Cysteine methyl ester is present on Cys-190. Cys-190 is lipidated: S-geranylgeranyl cysteine. Residues 191–193 (ALL) constitute a propeptide, removed in mature form.

Belongs to the small GTPase superfamily. Rho family. Post-translationally, (Microbial infection) Glycosylated at Tyr-34 by Yersinia ruckeri toxin Afp18. Mono-O-GlcNAcylation by Afp18 inhibits RhoA activation by guanine nucleotide exchange factors and blocks RhoA signaling.

It is found in the cell membrane. Regulates a signal transduction pathway linking plasma membrane receptors to the assembly of focal adhesions and actin stress fibers. The chain is Rho-related GTP-binding protein RhoA-A from Danio rerio (Zebrafish).